The following is a 193-amino-acid chain: ATP-dependent Clp protease proteolytic subunit (193 aa).

Ser98 serves as the catalytic Nucleophile. Residue His123 is part of the active site.

Belongs to the peptidase S14 family. In terms of assembly, fourteen ClpP subunits assemble into 2 heptameric rings which stack back to back to give a disk-like structure with a central cavity, resembling the structure of eukaryotic proteasomes.

It is found in the cytoplasm. The enzyme catalyses Hydrolysis of proteins to small peptides in the presence of ATP and magnesium. alpha-casein is the usual test substrate. In the absence of ATP, only oligopeptides shorter than five residues are hydrolyzed (such as succinyl-Leu-Tyr-|-NHMec, and Leu-Tyr-Leu-|-Tyr-Trp, in which cleavage of the -Tyr-|-Leu- and -Tyr-|-Trp bonds also occurs).. Functionally, cleaves peptides in various proteins in a process that requires ATP hydrolysis. Has a chymotrypsin-like activity. Plays a major role in the degradation of misfolded proteins. The sequence is that of ATP-dependent Clp protease proteolytic subunit from Histophilus somni (strain 2336) (Haemophilus somnus).